The sequence spans 815 residues: Probable E3 ubiquitin-protein ligase hulA (815 aa).

The C2 domain occupies 1-112 (MGSNLPSQPN…EMGGDEMLTR (112 aa)). Disordered regions lie at residues 134–237 (NLST…GWER) and 253–353 (RTTT…YFVD). 2 stretches are compositionally biased toward low complexity: residues 165-185 (ASAA…SNPS) and 202-212 (APGAAAGATPT). 2 stretches are compositionally biased toward polar residues: residues 213–226 (NTQG…SFED) and 253–270 (RTTT…QTQR). Positions 229 to 262 (GRLPAGWERREDNLGRTYYVDHNTRTTTWTRPSS) constitute a WW 1 domain. Residues 279–294 (LERRAHQSRMLPEDRT) are compositionally biased toward basic and acidic residues. Residues 295 to 308 (GANSPNLPETSQQA) show a composition bias toward polar residues. Over residues 324–333 (ATGATTAGTG) the composition is skewed to low complexity. WW domains are found at residues 333–366 (GELP…DPRR) and 393–426 (GPLP…DPRL). Residues 482–815 (SASDLKKRLM…VEETLGFGQE (334 aa)) form the HECT domain. Cys783 acts as the Glycyl thioester intermediate in catalysis.

Belongs to the RSP5/NEDD4 family. In terms of assembly, interacts with creD.

Its subcellular location is the cytoplasm. The catalysed reaction is S-ubiquitinyl-[E2 ubiquitin-conjugating enzyme]-L-cysteine + [acceptor protein]-L-lysine = [E2 ubiquitin-conjugating enzyme]-L-cysteine + N(6)-ubiquitinyl-[acceptor protein]-L-lysine.. The protein operates within protein modification; protein ubiquitination. Its function is as follows. E3 ubiquitin-protein ligase which accepts ubiquitin from an E2 ubiquitin-conjugating enzyme in the form of a thioester and then directly transfers the ubiquitin to targeted substrates. Probably involved in the regulatory network controlling carbon source utilization. The protein is Probable E3 ubiquitin-protein ligase hulA (hulA) of Aspergillus clavatus (strain ATCC 1007 / CBS 513.65 / DSM 816 / NCTC 3887 / NRRL 1 / QM 1276 / 107).